Reading from the N-terminus, the 277-residue chain is 2-dehydro-3-deoxyphosphooctonate aldolase (277 aa).

It belongs to the KdsA family.

It is found in the cytoplasm. The enzyme catalyses D-arabinose 5-phosphate + phosphoenolpyruvate + H2O = 3-deoxy-alpha-D-manno-2-octulosonate-8-phosphate + phosphate. It functions in the pathway carbohydrate biosynthesis; 3-deoxy-D-manno-octulosonate biosynthesis; 3-deoxy-D-manno-octulosonate from D-ribulose 5-phosphate: step 2/3. It participates in bacterial outer membrane biogenesis; lipopolysaccharide biosynthesis. The polypeptide is 2-dehydro-3-deoxyphosphooctonate aldolase (kdsA) (Mesorhizobium japonicum (strain LMG 29417 / CECT 9101 / MAFF 303099) (Mesorhizobium loti (strain MAFF 303099))).